Reading from the N-terminus, the 164-residue chain is R-phycoerythrin alpha chain (164 aa).

Asn47, Lys81, Cys82, Arg84, His88, Arg137, Cys139, and Arg142 together coordinate (2R,3E)-phycoerythrobilin.

The protein belongs to the phycobiliprotein family. Heterododecamer of 6 alpha and 6 beta chains. The basic functional unit of phycobiliproteins is a ring-shaped hexamer formed from two back-to-back trimers contacting via the alpha chain subunits. The trimers are composed of alpha/beta subunit heterodimers arranged around a three-fold axis of symmetry. The phycoerythrins also contain a gamma subunit which is located in the center of the hexamer. Contains two covalently linked phycoerythrobilin chromophores.

It is found in the plastid. Its subcellular location is the chloroplast thylakoid membrane. Functionally, light-harvesting photosynthetic tetrapyrrole chromophore-protein from the phycobiliprotein complex. In Griffithsia monilis (Red alga), this protein is R-phycoerythrin alpha chain (cpeA).